The primary structure comprises 446 residues: Dual specificity mitogen-activated protein kinase kinase 2 (446 aa).

Residues 27 to 42 (SSGSSAGLGFQGQSQQ) show a composition bias toward low complexity. A disordered region spans residues 27–51 (SSGSSAGLGFQGQSQQHSTVNSMQG). Residues 149–414 (LKDLGEIGRG…YKELLKHPFI (266 aa)) form the Protein kinase domain. ATP is bound by residues 155–163 (IGRGAYGSV) and K178. D276 (proton acceptor) is an active-site residue. Residue S304 is modified to Phosphoserine; by RAF. T308 carries the phosphothreonine; by RAF modification.

This sequence belongs to the protein kinase superfamily. STE Ser/Thr protein kinase family. MAP kinase kinase subfamily. In terms of processing, MAPKK is itself dependent on Ser/Thr phosphorylation for activity catalyzed by MAP kinase kinase kinases. In terms of tissue distribution, expressed abundantly in the adult brain and muscle.

It carries out the reaction L-seryl-[protein] + ATP = O-phospho-L-seryl-[protein] + ADP + H(+). The catalysed reaction is L-threonyl-[protein] + ATP = O-phospho-L-threonyl-[protein] + ADP + H(+). The enzyme catalyses L-tyrosyl-[protein] + ATP = O-phospho-L-tyrosyl-[protein] + ADP + H(+). Functionally, catalyzes the concomitant phosphorylation of a threonine and a tyrosine residue in a Thr-Glu-Tyr sequence located in MAP kinases. The chain is Dual specificity mitogen-activated protein kinase kinase 2 (map2k2) from Xenopus laevis (African clawed frog).